Here is a 240-residue protein sequence, read N- to C-terminus: 2,3,4,5-tetrahydropyridine-2,6-dicarboxylate N-acetyltransferase (240 aa).

This sequence belongs to the transferase hexapeptide repeat family. DapH subfamily.

The enzyme catalyses (S)-2,3,4,5-tetrahydrodipicolinate + acetyl-CoA + H2O = L-2-acetamido-6-oxoheptanedioate + CoA. The protein operates within amino-acid biosynthesis; L-lysine biosynthesis via DAP pathway; LL-2,6-diaminopimelate from (S)-tetrahydrodipicolinate (acetylase route): step 1/3. Its function is as follows. Catalyzes the transfer of an acetyl group from acetyl-CoA to tetrahydrodipicolinate. In Staphylococcus epidermidis (strain ATCC 12228 / FDA PCI 1200), this protein is 2,3,4,5-tetrahydropyridine-2,6-dicarboxylate N-acetyltransferase.